A 398-amino-acid chain; its full sequence is 2-epi-5-epi-valiolone synthase (398 aa).

Residues Asp-62, 93–96 (ETVK), 126–130 (GVLMD), 150–151 (TT), Lys-163, Lys-172, and 190–193 (FLAT) contribute to the NAD(+) site. Residue Lys-163 is part of the active site. A divalent metal cation-binding residues include Glu-205, His-276, and His-292.

It belongs to the sugar phosphate cyclases superfamily. EEVS family. NAD(+) is required as a cofactor. Co(2+) serves as cofactor.

The catalysed reaction is D-sedoheptulose 7-phosphate = 2-epi-5-epi-valiolone + phosphate. Functionally, catalyzes the cyclization of D-sedoheptulose 7-phosphate to 2-epi-5-epi-valiolone. Does not use ido-heptulose 7-phosphate and 3-deoxy-arabino-heptulosonate 7-phosphate. Involved in the biosynthesis of the acarviose moiety of the alpha-glucosidase inhibitor acarbose. The chain is 2-epi-5-epi-valiolone synthase from Actinoplanes sp. (strain ATCC 31044 / CBS 674.73 / SE50/110).